Consider the following 341-residue polypeptide: Malate dehydrogenase, mitochondrial (341 aa).

NAD(+) contacts are provided by residues 35–41 (GAAGGIG) and D61. R108 and R114 together coordinate substrate. NAD(+)-binding positions include N121 and 144–146 (ITN). Substrate contacts are provided by N146 and R180. Catalysis depends on H204, which acts as the Proton acceptor. M255 contacts NAD(+).

It belongs to the LDH/MDH superfamily. MDH type 1 family. Homodimer.

It is found in the mitochondrion matrix. It carries out the reaction (S)-malate + NAD(+) = oxaloacetate + NADH + H(+). Functionally, catalyzes the reversible conversion of (S)-malate to oxaloacetate in the citric acid cycle. The sequence is that of Malate dehydrogenase, mitochondrial from Caenorhabditis elegans.